The primary structure comprises 285 residues: uncharacterized protein (285 aa).

The Guanylate cyclase domain occupies 92–199 (TLLLADVEES…PTINRTARLR (108 aa)).

It belongs to the adenylyl cyclase class-4/guanylyl cyclase family.

This is an uncharacterized protein from Mycobacterium tuberculosis (strain ATCC 25618 / H37Rv).